Reading from the N-terminus, the 160-residue chain is General odorant-binding protein 2 (160 aa).

Residues 1–20 form the signal peptide; sequence MFSFLILVFVASVADSVIGT. Disulfide bonds link Cys-38–Cys-73, Cys-69–Cys-127, and Cys-116–Cys-136.

It belongs to the PBP/GOBP family. As to quaternary structure, homodimer. As to expression, detected in antenna (at protein level). Expressed at high levels in antenna.

Functionally, present in the aqueous fluid surrounding olfactory sensory dendrites and are thought to aid in the capture and transport of hydrophobic odorants into and through this fluid. This is General odorant-binding protein 2 from Bombyx mori (Silk moth).